A 264-amino-acid chain; its full sequence is Tryptophan synthase alpha chain (264 aa).

Catalysis depends on proton acceptor residues Glu49 and Asp60.

This sequence belongs to the TrpA family. Tetramer of two alpha and two beta chains.

The enzyme catalyses (1S,2R)-1-C-(indol-3-yl)glycerol 3-phosphate + L-serine = D-glyceraldehyde 3-phosphate + L-tryptophan + H2O. It functions in the pathway amino-acid biosynthesis; L-tryptophan biosynthesis; L-tryptophan from chorismate: step 5/5. Functionally, the alpha subunit is responsible for the aldol cleavage of indoleglycerol phosphate to indole and glyceraldehyde 3-phosphate. The polypeptide is Tryptophan synthase alpha chain (Geobacter sulfurreducens (strain ATCC 51573 / DSM 12127 / PCA)).